The sequence spans 1001 residues: Non-canonical poly(A) RNA polymerase protein Trf4-1 (1001 aa).

Composition is skewed to low complexity over residues 44–86 and 127–163; these read TING…NNSS and RNSTNINTTSGGSTSSSADSTTNRDNNSPANSSSTNG. Disordered stretches follow at residues 44 to 92 and 115 to 238; these read TING…PYLS and QQQQ…AGGA. Positions 164-178 are enriched in gly residues; that stretch reads PGAGTGTSTGAGGTG. Residues 179–216 are compositionally biased toward low complexity; the sequence is TNSPATTASSTAATTTGPATSMSDTSNNPPQSTTTPAS. Positions 328 and 330 each coordinate Mn(2+). The PAP-associated domain occupies 458–517; that stretch reads NLGVLLLEFFELYGRRFNYMKIGISIKNGGRYMPKDELQRDMVDGHRPSLLCIEDPLTPG. Disordered regions lie at residues 631 to 652, 687 to 740, 767 to 963, and 977 to 1001; these read PTAHGHSHAHSHSHGHAHPGAH, QQQQ…AQEV, ASNS…LRGT, and SSESSIASSSSSSSRSGQDQQRDER. A compositionally biased stretch (basic residues) spans 635 to 649; it reads GHSHAHSHSHGHAHP. 2 stretches are compositionally biased toward low complexity: residues 687-708 and 768-788; these read QQQQQNATAHTHSQQQTQNQSQ and SNSWSGNGNGNGNSSSSTGSS. Gly residues predominate over residues 827–841; the sequence is VGTGSNRGGGDGSGG. The segment covering 844–854 has biased composition (polar residues); sequence YNQRNNHNSSG. Over residues 855 to 880 the composition is skewed to low complexity; that stretch reads YYHQQYYVPPPMQQQLSKSNSSSNYH. Positions 881-912 are enriched in basic residues; sequence QQHHHSHSHGNHSHRQQHHHQQQHHHQQRPQH. Low complexity-rich tracts occupy residues 932-955 and 977-992; these read SAGNASNSSSNCSNSSSSSGSNNS and SSESSIASSSSSSSRS.

Belongs to the DNA polymerase type-B-like family. The cofactor is Mn(2+).

The protein localises to the cytoplasm. It carries out the reaction RNA(n) + ATP = RNA(n)-3'-adenine ribonucleotide + diphosphate. In terms of biological role, involved in a post-transcriptional quality control mechanism limiting inappropriate expression of genetic information. Polyadenylation is required for the degradative activity of the exosome on several of its nuclear RNA substrates. Polyadenylates RNA processing and degradation intermediates of snRNAs and mRNAs. The sequence is that of Non-canonical poly(A) RNA polymerase protein Trf4-1 from Drosophila melanogaster (Fruit fly).